Here is a 252-residue protein sequence, read N- to C-terminus: MFS-type transporter cctQ (252 aa).

2 helical membrane passes run 54–74 (IGSLMPLVYTTVAFFVAVVLP) and 116–136 (FGSFWVQSAVGTIPLFGIVGF). An N-linked (GlcNAc...) asparagine glycan is attached at N179. A run of 2 helical transmembrane segments spans residues 180 to 200 (FSICLAQIVVLLMINTVWILA) and 208 to 228 (FLVWFLLLGGACALLAMYFTT).

This sequence belongs to the major facilitator superfamily.

It is found in the membrane. It functions in the pathway mycotoxin biosynthesis. Functionally, MFS-type transporter; part of the gene cluster that mediates the biosynthesis of the mycotoxin cyclochlorotine, a hepatotoxic and carcinogenic cyclic chlorinated pentapeptide. Most likely responsible for cyclochlorotine secretion and thereby may contribute to intrinsic resistance. The polypeptide is MFS-type transporter cctQ (Talaromyces islandicus (Penicillium islandicum)).